A 222-amino-acid chain; its full sequence is Charged multivesicular body protein 3 (222 aa).

Residue Gly-2 is the site of N-myristoyl glycine attachment. The tract at residues 2 to 113 is intramolecular interaction with C-terminus; the sequence is GLFGKTQEKP…LQKSTEVMKA (112 aa). A coiled-coil region spans residues 22–54; the sequence is KIRKEMRVVDRQIRDIQREEEKVKRSVKDAAKK. 2 important for autoinhibitory function regions span residues 59 to 64 and 168 to 169; these read VCIVLA and IL. A coiled-coil region spans residues 141-222; that stretch reads EEMLEDTFES…MQSRLATLRS (82 aa). The tract at residues 151-220 is intramolecular interaction with N-terminus; it reads MDDQEEMEEE…EAMQSRLATL (70 aa). The interval 151–222 is interaction with VPS4A; that stretch reads MDDQEEMEEE…MQSRLATLRS (72 aa). Lys-179 participates in a covalent cross-link: Glycyl lysine isopeptide (Lys-Gly) (interchain with G-Cter in ubiquitin). Positions 180 to 222 are disordered; the sequence is APSKVTDALPEPEPPGAMAASEDEEEEEEALEAMQSRLATLRS. Ser-200 is modified (phosphoserine). Positions 200–210 are enriched in acidic residues; that stretch reads SEDEEEEEEAL. The MIT-interacting motif motif lies at 201 to 211; it reads EDEEEEEEALE. 2 interaction with STAMBP regions span residues 203-207 and 221-222; these read EEEEE and RS.

Belongs to the SNF7 family. In terms of assembly, probable core component of the endosomal sorting required for transport complex III (ESCRT-III). ESCRT-III components are thought to multimerize to form a flat lattice on the perimeter membrane of the endosome. Several assembly forms of ESCRT-III may exist that interact and act sequentially. Forms a metastable monomer in solution; its core structure (without part of the putative autoinhibitory C-terminal acidic region) oligomerizes into a flat lattice via two different dimerization interfaces. In vitro, heteromerizes with CHMP2A (but not CHMP4) to form helical tubular structures that expose membrane-interacting sites on the outside whereas VPS4B can associate on the inside of the tubule. May interact with IGFBP7; the relevance of such interaction however remains unclear. Interacts with CHMP2A. Interacts with CHMP4A; the interaction requires the release of CHMP4A autoinhibition. Interacts with VPS4A. Interacts with STAMBP; the interaction appears to relieve the autoinhibition of CHMP3. Interacts with VTA1. As to expression, widely expressed. Expressed in heart, brain, placenta, lung, liver, skeletal muscle, kidney and pancreas.

The protein localises to the cytoplasm. The protein resides in the cytosol. Its subcellular location is the membrane. It is found in the endosome. It localises to the late endosome membrane. Probable core component of the endosomal sorting required for transport complex III (ESCRT-III) which is involved in multivesicular bodies (MVBs) formation and sorting of endosomal cargo proteins into MVBs. MVBs contain intraluminal vesicles (ILVs) that are generated by invagination and scission from the limiting membrane of the endosome and mostly are delivered to lysosomes enabling degradation of membrane proteins, such as stimulated growth factor receptors, lysosomal enzymes and lipids. The MVB pathway appears to require the sequential function of ESCRT-O, -I,-II and -III complexes. ESCRT-III proteins mostly dissociate from the invaginating membrane before the ILV is released. The ESCRT machinery also functions in topologically equivalent membrane fission events, such as the terminal stages of cytokinesis and the budding of enveloped viruses (HIV-1 and other lentiviruses). ESCRT-III proteins are believed to mediate the necessary vesicle extrusion and/or membrane fission activities, possibly in conjunction with the AAA ATPase VPS4. Selectively binds to phosphatidylinositol 3,5-bisphosphate PtdIns(3,5)P2 and PtdIns(3,4)P2 in preference to other phosphoinositides tested. Involved in late stages of cytokinesis. Plays a role in endosomal sorting/trafficking of EGF receptor. Isoform 2 prevents stress-mediated cell death and accumulation of reactive oxygen species when expressed in yeast cells. The polypeptide is Charged multivesicular body protein 3 (CHMP3) (Homo sapiens (Human)).